Consider the following 838-residue polypeptide: Translation initiation factor IF-2 (838 aa).

The disordered stretch occupies residues 1-235 (MSDTDGKKPL…RSLAAMKREQ (235 aa)). Residues 18–27 (SGQVKQSFSH) are compositionally biased toward polar residues. Residues 50-60 (SGSSTTTSSPS) show a composition bias toward low complexity. A compositionally biased stretch (basic and acidic residues) spans 88–156 (KLREVDDAKR…AARRAEEAKR (69 aa)). The span at 162 to 177 (PAAAQPDAADSRASAP) shows a compositional bias: low complexity. A compositionally biased stretch (basic and acidic residues) spans 187-208 (SRKEREREADRDRTTKKDDSRR). Positions 335–509 (PRPPIITIMG…ELLDLRANPK (175 aa)) constitute a tr-type G domain. Residues 344-351 (GHVDHGKT) are G1. GTP is bound at residue 344-351 (GHVDHGKT). Positions 369–373 (GITQH) are G2. The segment at 391-394 (DTPG) is G3. GTP-binding positions include 391–395 (DTPGH) and 445–448 (NKID). The segment at 445–448 (NKID) is G4. A G5 region spans residues 481–483 (SAK).

It belongs to the TRAFAC class translation factor GTPase superfamily. Classic translation factor GTPase family. IF-2 subfamily.

It is found in the cytoplasm. One of the essential components for the initiation of protein synthesis. Protects formylmethionyl-tRNA from spontaneous hydrolysis and promotes its binding to the 30S ribosomal subunits. Also involved in the hydrolysis of GTP during the formation of the 70S ribosomal complex. The polypeptide is Translation initiation factor IF-2 (Cereibacter sphaeroides (strain ATCC 17025 / ATH 2.4.3) (Rhodobacter sphaeroides)).